The chain runs to 284 residues: Prestalk D11 protein (284 aa).

A signal peptide spans 1–25 (MLNKLILLLILSSCLVLSVKSEVNV). Residues 25-64 (VDCSLVRCAQPICKPHYRLNMTDSCCGRCEPCTDVACTLQ) form an A-1 repeat. One copy of the B-1 repeat lies at 65-82 (VKYCQDGEVPTGCCPCTL). The A-2 repeat unit spans residues 88 to 126 (DCSLVKCARPVCKPYYRLNMTDSCCGRCEPCTGVACTLQ). The B-2 repeat unit spans residues 127–144 (IKYCKDGEVPTGCCPCTP). A C-1 repeat occupies 145 to 159 (QPTKKPDCSKVPCPK). The stretch at 161 to 178 (LKYCQEGELPTGCCPCTP) is one B-3 repeat. One copy of the C-2 repeat lies at 179–193 (QPTKKPDCSRVPCPK). The B-4 repeat unit spans residues 195–212 (LKYCKEGELPTGCCPCTP). The C-3 repeat unit spans residues 213 to 228 (QPTKKPDCSDVMCTMD). Residues 229 to 246 (IRYCKNGELPTGCCPCTP) form a B-5 repeat. A C-4 repeat occupies 247–262 (QETKVPDCSKAMCTMD). The B-6 repeat unit spans residues 263 to 278 (IKYCKPGEKPFGCCPC).

This Dictyostelium discoideum (Social amoeba) protein is Prestalk D11 protein (ampA).